The following is a 489-amino-acid chain: Fumarate reductase (CoM/CoB) subunit B (489 aa).

The region spanning 2 to 89 (INVKVLRFEP…GAVIEPVDLP (88 aa)) is the 2Fe-2S ferredoxin-type domain. Cys53, Cys58, Cys61, and Cys73 together coordinate [2Fe-2S] cluster. 4Fe-4S ferredoxin-type domains are found at residues 124–158 (PEDYQDTKKLRGCIECFSCISSCPVIKESTEYAGP) and 178–209 (AAGGVEEGLYCCTTCGKCAEVCPKELNVPGDA). The [4Fe-4S] cluster site is built by Cys136, Cys139, Cys142, Cys146, Cys189, Cys192, Cys195, and Cys199.

In terms of assembly, subunit B of the heterodimeric fumarate reductase of methanogenic Archaea, composed of subunits A (TfrA) and B (TfrB). [2Fe-2S] cluster is required as a cofactor. [4Fe-4S] cluster serves as cofactor.

It is found in the cytoplasm. It carries out the reaction coenzyme B + coenzyme M + fumarate = coenzyme M-coenzyme B heterodisulfide + succinate. In terms of biological role, catalyzes the reduction of fumarate with reduced coenzyme M (CoM-S-H) and coenzyme B (CoB-S-H). In vitro, is able to reduces fumarate with reduced benzyl viologen, oxidize CoM-S-H and CoB-S-H to CoM-S-S-CoB with methylene blue, and reduce CoM-S-S-CoB with reduced benzyl viologen. The enzyme has specificity for the two thiol compounds as the CoB--CoM heterodisulfide reductase. The enzyme is very sensitive to oxygen. This chain is Fumarate reductase (CoM/CoB) subunit B, found in Methanothermobacter marburgensis (strain ATCC BAA-927 / DSM 2133 / JCM 14651 / NBRC 100331 / OCM 82 / Marburg) (Methanobacterium thermoautotrophicum).